The sequence spans 347 residues: NADH-quinone oxidoreductase subunit H (347 aa).

The next 8 membrane-spanning stretches (helical) occupy residues 13–33, 82–102, 115–135, 161–181, 198–218, 258–278, 286–306, and 321–341; these read LIMI…IAYI, AVFL…WAVV, VGIL…IMGG, IGLV…TDIV, FLDW…ISAL, AVVL…LPPV, VPGI…FAMV, and LGWK…AFVL.

The protein belongs to the complex I subunit 1 family. As to quaternary structure, NDH-1 is composed of 14 different subunits. Subunits NuoA, H, J, K, L, M, N constitute the membrane sector of the complex.

The protein localises to the cell inner membrane. It carries out the reaction a quinone + NADH + 5 H(+)(in) = a quinol + NAD(+) + 4 H(+)(out). Functionally, NDH-1 shuttles electrons from NADH, via FMN and iron-sulfur (Fe-S) centers, to quinones in the respiratory chain. The immediate electron acceptor for the enzyme in this species is believed to be ubiquinone. Couples the redox reaction to proton translocation (for every two electrons transferred, four hydrogen ions are translocated across the cytoplasmic membrane), and thus conserves the redox energy in a proton gradient. This subunit may bind ubiquinone. The protein is NADH-quinone oxidoreductase subunit H of Rhizobium rhizogenes (strain K84 / ATCC BAA-868) (Agrobacterium radiobacter).